A 106-amino-acid chain; its full sequence is Toxin-like structure LSTX-D9 (106 aa).

The N-terminal stretch at 1-20 (MMKVLVVVALLLTLIIYSSS) is a signal peptide. A propeptide spanning residues 21-41 (DGIDDLEADELVSLMAHEQTR) is cleaved from the precursor. 4 disulfides stabilise this stretch: Cys-45/Cys-60, Cys-52/Cys-69, Cys-59/Cys-85, and Cys-71/Cys-83.

It belongs to the neurotoxin 19 (CSTX) family. 02 (D7) subfamily. Expressed by the venom gland.

It localises to the secreted. The polypeptide is Toxin-like structure LSTX-D9 (Lycosa singoriensis (Wolf spider)).